Here is a 153-residue protein sequence, read N- to C-terminus: uncharacterized protein (153 aa).

The first 22 residues, 1-22 (MKLLKKGTTVLFVMIMAVMLVA), serve as a signal peptide directing secretion. A lipid anchor (N-palmitoyl cysteine) is attached at C23. The S-diacylglycerol cysteine moiety is linked to residue C23. Positions 121–153 (LPGMASTGDVSKGISMKESEKMLKSQGFKEVEK) are disordered. Basic and acidic residues predominate over residues 135 to 153 (SMKESEKMLKSQGFKEVEK).

To E.coli YehR.

The protein resides in the cell membrane. This is an uncharacterized protein from Listeria innocua serovar 6a (strain ATCC BAA-680 / CLIP 11262).